The chain runs to 400 residues: Methylthioribose kinase (400 aa).

ATP is bound by residues N44, K61, and 115-117 (EDL). A substrate-binding site is contributed by D233. Residue 250 to 252 (DPE) participates in ATP binding. R340 is a substrate binding site.

Belongs to the methylthioribose kinase family. In terms of assembly, homodimer.

The catalysed reaction is 5-(methylsulfanyl)-D-ribose + ATP = 5-(methylsulfanyl)-alpha-D-ribose 1-phosphate + ADP + H(+). The protein operates within amino-acid biosynthesis; L-methionine biosynthesis via salvage pathway; S-methyl-5-thio-alpha-D-ribose 1-phosphate from S-methyl-5'-thioadenosine (hydrolase route): step 2/2. In terms of biological role, catalyzes the phosphorylation of methylthioribose into methylthioribose-1-phosphate. The polypeptide is Methylthioribose kinase (Geobacillus sp. (strain WCH70)).